The sequence spans 336 residues: Ribosomal RNA large subunit methyltransferase F (336 aa).

It belongs to the methyltransferase superfamily. METTL16/RlmF family.

The protein localises to the cytoplasm. The catalysed reaction is adenosine(1618) in 23S rRNA + S-adenosyl-L-methionine = N(6)-methyladenosine(1618) in 23S rRNA + S-adenosyl-L-homocysteine + H(+). In terms of biological role, specifically methylates the adenine in position 1618 of 23S rRNA. In Yersinia pestis (strain Pestoides F), this protein is Ribosomal RNA large subunit methyltransferase F.